Consider the following 305-residue polypeptide: Superoxide dismutase [Fe] 2, chloroplastic (305 aa).

Residues 1 to 46 (MMNVAVTATPSSLLYSPLLLPSQGPNRRMQWKRNGKRRLGTKVAVS) constitute a chloroplast transit peptide. Fe cation contacts are provided by H77, H129, D228, and H232. Residues 270–305 (AVQREQEGTETEDEENPDDEVPEVYLDSDIDVSEVD) are disordered. Over residues 277–305 (GTETEDEENPDDEVPEVYLDSDIDVSEVD) the composition is skewed to acidic residues.

Belongs to the iron/manganese superoxide dismutase family. As to quaternary structure, heterodimer with FSD3. Interacts with MRL7 and PRDA1. Fe cation serves as cofactor.

The protein localises to the plastid. Its subcellular location is the chloroplast thylakoid. The catalysed reaction is 2 superoxide + 2 H(+) = H2O2 + O2. Activated by cpn20/cpn21 (in vitro). Its function is as follows. Destroys superoxide anion radicals which are normally produced within the cells and which are toxic to biological systems. Plays important role in chloroplast development, particularly in the maintenance of thylakoids membranes. Seems to act as a heterodimer with FSD3. The polypeptide is Superoxide dismutase [Fe] 2, chloroplastic (FSD2) (Arabidopsis thaliana (Mouse-ear cress)).